A 316-amino-acid polypeptide reads, in one-letter code: N-acetyl-gamma-glutamyl-phosphate reductase (316 aa).

Cys136 is a catalytic residue.

Belongs to the NAGSA dehydrogenase family. Type 1 subfamily.

The protein localises to the cytoplasm. It catalyses the reaction N-acetyl-L-glutamate 5-semialdehyde + phosphate + NADP(+) = N-acetyl-L-glutamyl 5-phosphate + NADPH + H(+). The protein operates within amino-acid biosynthesis; L-arginine biosynthesis; N(2)-acetyl-L-ornithine from L-glutamate: step 3/4. Its function is as follows. Catalyzes the NADPH-dependent reduction of N-acetyl-5-glutamyl phosphate to yield N-acetyl-L-glutamate 5-semialdehyde. The sequence is that of N-acetyl-gamma-glutamyl-phosphate reductase from Xanthomonas campestris pv. campestris (strain 8004).